A 1687-amino-acid chain; its full sequence is PH domain leucine-rich repeat-containing protein phosphatase 1 (1687 aa).

Met-1 bears the N-acetylmethionine mark. Disordered stretches follow at residues 1–96 (MEPA…GGGA) and 230–406 (AAAP…AAPD). The segment covering 78–96 (APQPAAGGAAPVPAAGGGA) has biased composition (low complexity). The residue at position 286 (Ser-286) is a Phosphoserine. Residues 314–326 (DTESFSLSPSAES) are compositionally biased toward polar residues. A Phosphoserine modification is found at Ser-372. The PH domain maps to 492-592 (RIQLSGMYNV…WLRQVSKVAS (101 aa)). LRR repeat units lie at residues 594–615 (RISS…LFYS), 617–638 (DLTH…PAAR), 648–669 (KLKS…VCSI), 671–692 (TLAE…VGDM), 694–715 (NLQT…LESM), 717–739 (QLSY…EKLT), 740–760 (AVDK…QALR), 764–785 (HIKH…EVDF), 788–809 (HVTQ…IFNN), 829–850 (FLKA…PVPN), 851–872 (YLSY…VCES), 874–895 (KLEV…LFCN), 897–918 (SLRK…LERT), 919–940 (SVEV…LLMK), 943–964 (SLRF…TLSE), 969–989 (ILQE…PLLT), 993–1014 (RLKI…KMAK), 1017–1038 (ELEE…IMNC), 1040–1061 (RMHT…MQLP), 1062–1083 (EVKC…ENLP), and 1085–1106 (KLQE…SLEL). One can recognise a PPM-type phosphatase domain in the interval 1131 to 1378 (SHGYTEASGV…DSISAVVVQL (248 aa)). The Mn(2+) site is built by Asp-1166, Gly-1167, Lys-1330, and Asp-1369. 2 disordered regions span residues 1414–1465 (DRPS…SSPA) and 1604–1687 (PGGY…DTPL). Residues 1424–1445 (SSSSGMASEISSELSTSEMSSE) show a composition bias toward low complexity. Positions 1649 to 1669 (LPPPPQPPQPQPQPQPQPQPQ) are enriched in pro residues. The PDZ-binding signature appears at 1685-1687 (TPL).

As to quaternary structure, interacts with the nucleotide free form of K-Ras (KRAS) via its LRR repeats. Interacts with AKT2, AKT3 and PRKCB. Interacts with WDR48 and USP12. It depends on Mn(2+) as a cofactor. In terms of tissue distribution, isoforms 1 and 2 are expressed in the retina.

The protein localises to the cytoplasm. The protein resides in the membrane. It localises to the nucleus. The enzyme catalyses O-phospho-L-seryl-[protein] + H2O = L-seryl-[protein] + phosphate. It catalyses the reaction O-phospho-L-threonyl-[protein] + H2O = L-threonyl-[protein] + phosphate. With respect to regulation, insensitive to okadaic acid. Deubiquitination by WDR48-USP12 complex positively regulates PHLPP1 stability. Protein phosphatase involved in regulation of Akt and PKC signaling. Mediates dephosphorylation in the C-terminal domain hydrophobic motif of members of the AGC Ser/Thr protein kinase family; specifically acts on 'Ser-473' of AKT2 and AKT3, 'Ser-660' of PRKCB and 'Ser-657' of PRKCA. Isoform 2 seems to have a major role in regulating Akt signaling in hippocampal neurons. Akt regulates the balance between cell survival and apoptosis through a cascade that primarily alters the function of transcription factors that regulate pro- and antiapoptotic genes. Dephosphorylation of 'Ser-473' of Akt triggers apoptosis and suppression of tumor growth. Dephosphorylation of PRKCA and PRKCB leads to their destabilization and degradation. Dephosphorylates STK4 on 'Thr-387' leading to STK4 activation and apoptosis. Dephosphorylates RPS6KB1 and is involved in regulation of cap-dependent translation. Inhibits cancer cell proliferation and may act as a tumor suppressor. Dephosphorylates RAF1 inhibiting its kinase activity. May act as a negative regulator of K-Ras signaling in membrane rafts. Involved in the hippocampus-dependent long-term memory formation. Involved in circadian control by regulating the consolidation of circadian periodicity after resetting. Involved in development and function of regulatory T-cells. The sequence is that of PH domain leucine-rich repeat-containing protein phosphatase 1 (Phlpp1) from Mus musculus (Mouse).